We begin with the raw amino-acid sequence, 341 residues long: Anthranilate phosphoribosyltransferase (341 aa).

Residues glycine 79, 82–83 (GD), threonine 87, 89–92 (NIST), 107–115 (KHGNRAVSS), and serine 119 contribute to the 5-phospho-alpha-D-ribose 1-diphosphate site. Position 79 (glycine 79) interacts with anthranilate. Serine 91 lines the Mg(2+) pocket. Asparagine 110 contacts anthranilate. Arginine 165 is an anthranilate binding site. Mg(2+)-binding residues include aspartate 224 and glutamate 225.

It belongs to the anthranilate phosphoribosyltransferase family. In terms of assembly, homodimer. The cofactor is Mg(2+).

The enzyme catalyses N-(5-phospho-beta-D-ribosyl)anthranilate + diphosphate = 5-phospho-alpha-D-ribose 1-diphosphate + anthranilate. Its pathway is amino-acid biosynthesis; L-tryptophan biosynthesis; L-tryptophan from chorismate: step 2/5. Catalyzes the transfer of the phosphoribosyl group of 5-phosphorylribose-1-pyrophosphate (PRPP) to anthranilate to yield N-(5'-phosphoribosyl)-anthranilate (PRA). The protein is Anthranilate phosphoribosyltransferase of Bacillus cereus (strain AH820).